The sequence spans 229 residues: Aquaporin Z (229 aa).

2 consecutive transmembrane segments (helical) span residues 8-28 (FFGT…AAGV) and 33-53 (IGYL…AYAI). Positions 62 to 64 (NPA) match the NPA 1 motif. The next 3 membrane-spanning stretches (helical) occupy residues 81–101 (LPYV…LYLI), 131–151 (AALV…LGAT), and 158–178 (GFAP…SIPV). Positions 184-186 (NPA) match the NPA 2 motif. A helical membrane pass occupies residues 199–219 (AVSQLWLFWVAPILGAVLGAL).

Belongs to the MIP/aquaporin (TC 1.A.8) family. Homotetramer.

It is found in the cell inner membrane. The enzyme catalyses H2O(in) = H2O(out). Channel that permits osmotically driven movement of water in both directions. It is involved in the osmoregulation and in the maintenance of cell turgor during volume expansion in rapidly growing cells. It mediates rapid entry or exit of water in response to abrupt changes in osmolarity. The chain is Aquaporin Z from Pseudomonas aeruginosa (strain ATCC 15692 / DSM 22644 / CIP 104116 / JCM 14847 / LMG 12228 / 1C / PRS 101 / PAO1).